We begin with the raw amino-acid sequence, 668 residues long: DNA ligase (668 aa).

Residues Asp-37–Asp-41, Ser-86–Met-87, and Glu-116 contribute to the NAD(+) site. Lys-118 acts as the N6-AMP-lysine intermediate in catalysis. The NAD(+) site is built by Arg-139, Glu-173, Lys-288, and Lys-312. Residues Cys-406, Cys-409, Cys-424, and Cys-429 each coordinate Zn(2+). Residues Ala-590–Lys-668 form the BRCT domain.

It belongs to the NAD-dependent DNA ligase family. LigA subfamily. Mg(2+) serves as cofactor. Requires Mn(2+) as cofactor.

It catalyses the reaction NAD(+) + (deoxyribonucleotide)n-3'-hydroxyl + 5'-phospho-(deoxyribonucleotide)m = (deoxyribonucleotide)n+m + AMP + beta-nicotinamide D-nucleotide.. Functionally, DNA ligase that catalyzes the formation of phosphodiester linkages between 5'-phosphoryl and 3'-hydroxyl groups in double-stranded DNA using NAD as a coenzyme and as the energy source for the reaction. It is essential for DNA replication and repair of damaged DNA. The sequence is that of DNA ligase from Lactobacillus johnsonii (strain CNCM I-12250 / La1 / NCC 533).